The following is a 356-amino-acid chain: Heat-inducible transcription repressor HrcA (356 aa).

The protein belongs to the HrcA family.

Negative regulator of class I heat shock genes (grpE-dnaK-dnaJ and groELS operons). Prevents heat-shock induction of these operons. The polypeptide is Heat-inducible transcription repressor HrcA (Chlorobaculum parvum (strain DSM 263 / NCIMB 8327) (Chlorobium vibrioforme subsp. thiosulfatophilum)).